Reading from the N-terminus, the 865-residue chain is DNA topoisomerase 1 (865 aa).

Positions 3-142 (KALVIVESPA…RYSRVVFNEI (140 aa)) constitute a Toprim domain. Glutamate 9 contacts Mg(2+). The segment at 37 to 65 (LPTSGSAAKKSADSTSTKTAKKPKKDERG) is disordered. Residues 39 to 54 (TSGSAAKKSADSTSTK) are compositionally biased toward low complexity. Aspartate 111 is a Mg(2+) binding site. Residues 158–575 (NINRVNAQQA…NFFSDFTQQL (418 aa)) enclose the Topo IA-type catalytic domain. The interval 192–197 (SAGRVQ) is interaction with DNA. The active-site O-(5'-phospho-DNA)-tyrosine intermediate is the tyrosine 319. 3 consecutive C4-type zinc fingers follow at residues 599-630 (CPTCGRKMGIRTASTGVFLGCSGYALSPKERC), 662-689 (CQKCGTAMDSYLIDPKRKLHVCGNNPTC), and 711-736 (CEKCGSEMHLKMGRFGKYMACTNDEC).

The protein belongs to the type IA topoisomerase family. As to quaternary structure, monomer. Requires Mg(2+) as cofactor.

It catalyses the reaction ATP-independent breakage of single-stranded DNA, followed by passage and rejoining.. Releases the supercoiling and torsional tension of DNA, which is introduced during the DNA replication and transcription, by transiently cleaving and rejoining one strand of the DNA duplex. Introduces a single-strand break via transesterification at a target site in duplex DNA. The scissile phosphodiester is attacked by the catalytic tyrosine of the enzyme, resulting in the formation of a DNA-(5'-phosphotyrosyl)-enzyme intermediate and the expulsion of a 3'-OH DNA strand. The free DNA strand then undergoes passage around the unbroken strand, thus removing DNA supercoils. Finally, in the religation step, the DNA 3'-OH attacks the covalent intermediate to expel the active-site tyrosine and restore the DNA phosphodiester backbone. This Salmonella typhimurium (strain LT2 / SGSC1412 / ATCC 700720) protein is DNA topoisomerase 1.